An 82-amino-acid polypeptide reads, in one-letter code: Chaperone protein DnaJ 1 (82 aa).

Positions 1-33 (YHLGGPPVTLKLPPGTPAGRTMRARGKGAVRKD) are disordered.

The protein belongs to the DnaJ family. As to quaternary structure, homodimer. Zn(2+) serves as cofactor.

The protein localises to the cytoplasm. Functionally, participates actively in the response to hyperosmotic and heat shock by preventing the aggregation of stress-denatured proteins and by disaggregating proteins, also in an autonomous, DnaK-independent fashion. Unfolded proteins bind initially to DnaJ; upon interaction with the DnaJ-bound protein, DnaK hydrolyzes its bound ATP, resulting in the formation of a stable complex. GrpE releases ADP from DnaK; ATP binding to DnaK triggers the release of the substrate protein, thus completing the reaction cycle. Several rounds of ATP-dependent interactions between DnaJ, DnaK and GrpE are required for fully efficient folding. Also involved, together with DnaK and GrpE, in the DNA replication of plasmids through activation of initiation proteins. The polypeptide is Chaperone protein DnaJ 1 (dnaJ1) (Streptomyces albus G).